Consider the following 159-residue polypeptide: Putative ribosomal RNA large subunit methyltransferase H (159 aa).

S-adenosyl-L-methionine contacts are provided by residues Leu-76, Gly-108, and 127–132 (FSKMTF).

This sequence belongs to the RNA methyltransferase RlmH family.

The protein localises to the cytoplasm. The enzyme catalyses pseudouridine(1915) in 23S rRNA + S-adenosyl-L-methionine = N(3)-methylpseudouridine(1915) in 23S rRNA + S-adenosyl-L-homocysteine + H(+). Its function is as follows. Specifically methylates the pseudouridine at position 1915 (m3Psi1915) in 23S rRNA. The polypeptide is Putative ribosomal RNA large subunit methyltransferase H (Methanococcus maripaludis (strain C6 / ATCC BAA-1332)).